We begin with the raw amino-acid sequence, 814 residues long: ATP-dependent RNA helicase dbp-7 (814 aa).

The interval 26-102 (GGRWRDRVKA…PPPPPTHAMK (77 aa)) is disordered. Composition is skewed to basic and acidic residues over residues 28 to 42 (RWRDRVKAQKGEKGG) and 69 to 78 (QRTEDGDSGR). Positions 145 to 174 (ENFLSLGLSRRVSQHLATKLEMKAPTAIQK) match the Q motif motif. The Helicase ATP-binding domain occupies 178-384 (PQLVKEDSDA…EISLEDAVHI (207 aa)). Residue 191–198 (AETGSGKT) coordinates ATP. The short motif at 313–316 (DEGD) is the DEAD box element. Positions 422 to 622 (RLVTLIALLK…GFATNINVPG (201 aa)) constitute a Helicase C-terminal domain. Disordered regions lie at residues 464–483 (TPRAEPEPKPEGEAPTKPNI), 662–695 (ESKSEKFAASKQGKKGKKDAKKDENKTPDNPLLV), and 741–795 (GIGG…AGRR). Residues 467 to 477 (AEPEPKPEGEA) show a composition bias toward basic and acidic residues. The segment covering 779 to 790 (DDDERDFGAADE) has biased composition (acidic residues).

Belongs to the DEAD box helicase family. DDX31/DBP7 subfamily.

Its subcellular location is the nucleus. It localises to the nucleolus. It carries out the reaction ATP + H2O = ADP + phosphate + H(+). ATP-binding RNA helicase involved in the biogenesis of 60S ribosomal subunits and is required for the normal formation of 25S and 5.8S rRNAs. This Neurospora crassa (strain ATCC 24698 / 74-OR23-1A / CBS 708.71 / DSM 1257 / FGSC 987) protein is ATP-dependent RNA helicase dbp-7 (dbp-7).